Consider the following 144-residue polypeptide: Large ribosomal subunit protein uL14 (144 aa).

It belongs to the universal ribosomal protein uL14 family. In terms of assembly, part of the 50S ribosomal subunit. Forms a cluster with proteins L3 and L24e, part of which may contact the 16S rRNA in 2 intersubunit bridges.

In terms of biological role, binds to 23S rRNA. Forms part of two intersubunit bridges in the 70S ribosome. This Pyrobaculum arsenaticum (strain DSM 13514 / JCM 11321 / PZ6) protein is Large ribosomal subunit protein uL14.